We begin with the raw amino-acid sequence, 327 residues long: tRNA N6-adenosine threonylcarbamoyltransferase (327 aa).

2 residues coordinate Fe cation: histidine 109 and histidine 113. Substrate-binding positions include 132-136 (MVSGG), aspartate 165, glycine 178, aspartate 182, and asparagine 268. Position 296 (aspartate 296) interacts with Fe cation.

It belongs to the KAE1 / TsaD family. Fe(2+) is required as a cofactor.

It localises to the cytoplasm. The enzyme catalyses L-threonylcarbamoyladenylate + adenosine(37) in tRNA = N(6)-L-threonylcarbamoyladenosine(37) in tRNA + AMP + H(+). Functionally, required for the formation of a threonylcarbamoyl group on adenosine at position 37 (t(6)A37) in tRNAs that read codons beginning with adenine. Is involved in the transfer of the threonylcarbamoyl moiety of threonylcarbamoyl-AMP (TC-AMP) to the N6 group of A37, together with TsaE and TsaB. TsaD likely plays a direct catalytic role in this reaction. The sequence is that of tRNA N6-adenosine threonylcarbamoyltransferase from Thermotoga neapolitana (strain ATCC 49049 / DSM 4359 / NBRC 107923 / NS-E).